The chain runs to 608 residues: ESX-3 secretion system protein EccA3 (608 aa).

Positions 284-303 (EARSDPWDPETEPSEAEFVD) are disordered. A compositionally biased stretch (acidic residues) spans 290–301 (WDPETEPSEAEF). Residue 365-372 (GPPGTGKT) coordinates ATP.

Belongs to the CbxX/CfxQ family. As to quaternary structure, part of the ESX-3 / type VII secretion system (T7SS), which is composed of cytosolic and membrane components.

Its subcellular location is the cytoplasm. In terms of biological role, part of the ESX-3 specialized secretion system, which is required for siderophore-mediated iron acquisition and for the secretion of EsxH and EsxG. EccA3 exhibits ATPase activity and may provide energy for the export of ESX-3 substrates. The polypeptide is ESX-3 secretion system protein EccA3 (Mycolicibacterium smegmatis (strain ATCC 700084 / mc(2)155) (Mycobacterium smegmatis)).